The chain runs to 333 residues: Taste receptor type 2 member 38 (333 aa).

The Extracellular portion of the chain corresponds to 1 to 17 (MLTLTRIHTVSYEVRST). A helical transmembrane segment spans residues 18–38 (FLFISVLEFAVGFLTNAFVFL). Residues 39–55 (VNFWDVVKRQPLSNSDC) lie on the Cytoplasmic side of the membrane. The helical transmembrane segment at 56 to 76 (VLLCLSISRLFLHGLLFLSAI) threads the bilayer. At 77 to 94 (QLTHFQKLSEPLNHSYQA) the chain is on the extracellular side. The chain crosses the membrane as a helical span at residues 95-115 (INMLWMIANQANLWLAACLSL). At 116 to 142 (LYCSKLIRFSHTFLICLASWVSRKISQ) the chain is on the cytoplasmic side. A helical membrane pass occupies residues 143–163 (MLLGIILCSCICTVLCVWCFF). The Extracellular segment spans residues 164–190 (SRPHFTVTTVLFMNNNTRLNWQIKDLN). Asn-178 carries N-linked (GlcNAc...) asparagine glycosylation. Residues 191 to 211 (LFYSFLFCYLWSVPPFLLFLV) traverse the membrane as a helical segment. The Cytoplasmic segment spans residues 212-251 (SSGMLTVSLGRHMRTMKVYTRDSRDPSLEAHIKALKSLVS). The chain crosses the membrane as a helical span at residues 252–272 (FFCFFVISSCAAFISVPLLIL). Residues 273 to 276 (WRDK) are Extracellular-facing. The chain crosses the membrane as a helical span at residues 277–297 (IGVMVCVGIMAACPSGHAAVL). The Cytoplasmic segment spans residues 298–333 (ISGNAKLRRAVTTILLWAQSSLKVRADHKADSRTLC).

This sequence belongs to the G-protein coupled receptor T2R family.

Its subcellular location is the membrane. Receptor that may play a role in the perception of bitterness and is gustducin-linked. May play a role in sensing the chemical composition of the gastrointestinal content. The activity of this receptor may stimulate alpha gustducin, mediate PLC-beta-2 activation and lead to the gating of TRPM5. In Pan paniscus (Pygmy chimpanzee), this protein is Taste receptor type 2 member 38 (TAS2R38).